The primary structure comprises 247 residues: Adenosylcobinamide-GDP ribazoletransferase (247 aa).

Helical transmembrane passes span 34 to 54 (IITF…VFMA), 59 to 79 (FGVP…TGGF), 113 to 133 (GGLA…ELAL), 138 to 158 (ILAS…LLMY), and 194 to 214 (VLLP…AIFI).

It belongs to the CobS family. The cofactor is Mg(2+).

It localises to the cell inner membrane. It catalyses the reaction alpha-ribazole + adenosylcob(III)inamide-GDP = adenosylcob(III)alamin + GMP + H(+). The enzyme catalyses alpha-ribazole 5'-phosphate + adenosylcob(III)inamide-GDP = adenosylcob(III)alamin 5'-phosphate + GMP + H(+). It participates in cofactor biosynthesis; adenosylcobalamin biosynthesis; adenosylcobalamin from cob(II)yrinate a,c-diamide: step 7/7. Its function is as follows. Joins adenosylcobinamide-GDP and alpha-ribazole to generate adenosylcobalamin (Ado-cobalamin). Also synthesizes adenosylcobalamin 5'-phosphate from adenosylcobinamide-GDP and alpha-ribazole 5'-phosphate. The chain is Adenosylcobinamide-GDP ribazoletransferase from Escherichia coli O17:K52:H18 (strain UMN026 / ExPEC).